Consider the following 434-residue polypeptide: ATP-dependent RNA helicase uap56 (434 aa).

The interval 1–43 is disordered; the sequence is MASAQEDLIDYEEEEELVQDQPAQEITPAADTAENGEKSDKKG. A compositionally biased stretch (acidic residues) spans 7 to 18; the sequence is DLIDYEEEEELV. The Q motif motif lies at 51 to 79; that stretch reads TGFRDFLLKPELLRAITDSGFEHPSEVQQ. Residues 82–257 enclose the Helicase ATP-binding domain; sequence IPQSILGTDV…KKFMQNPLEI (176 aa). Residue 95–102 participates in ATP binding; the sequence is AKSGMGKT. Residues 204–207 carry the DECD box motif; that stretch reads DECD. A Helicase C-terminal domain is found at 269 to 430; the sequence is GLQQHYVKLE…ELPDEIDVGS (162 aa).

Belongs to the DEAD box helicase family. DECD subfamily. In terms of assembly, interacts with mlo3 and rae1.

It localises to the nucleus. The catalysed reaction is ATP + H2O = ADP + phosphate + H(+). ATP-binding RNA helicase involved in transcription elongation and required for the export of mRNA out of the nucleus. SUB2 also plays a role in pre-mRNA splicing and spliceosome assembly. May be involved in rDNA and telomeric silencing, and maintenance of genome integrity. Links the mRNA adapter mlo3 to rae1 for targeting mRNA-protein complex to the proteins of the nucleoporin complex (NPC). The chain is ATP-dependent RNA helicase uap56 (uap56) from Schizosaccharomyces pombe (strain 972 / ATCC 24843) (Fission yeast).